The primary structure comprises 2343 residues: Coagulation factor VIII (2343 aa).

An N-terminal signal peptide occupies residues methionine 1–serine 19. Plastocyanin-like domains are found at residues alanine 20–cysteine 199 and glutamate 207–cysteine 343. The F5/8 type A 1 domain occupies alanine 20–cysteine 343. 2 N-linked (GlcNAc...) asparagine glycosylation sites follow: asparagine 233 and asparagine 253. Residues tyrosine 359 and tyrosine 408 each carry the sulfotyrosine modification. Plastocyanin-like domains are found at residues lysine 393 to cysteine 567 and asparagine 577 to cysteine 724. The 332-residue stretch at lysine 393 to cysteine 724 folds into the F5/8 type A 2 domain. N-linked (GlcNAc...) asparagine glycosylation is present at asparagine 595. A sulfotyrosine mark is found at tyrosine 731, tyrosine 732, and tyrosine 736. Over residues proline 752–histidine 761 the composition is skewed to polar residues. Disordered stretches follow at residues proline 752–threonine 774 and alanine 828–glutamate 865. Residues serine 754–arginine 1659 form a b region. Composition is skewed to basic and acidic residues over residues alanine 828–glycine 841 and proline 850–threonine 861. N-linked (GlcNAc...) asparagine glycans are attached at residues asparagine 877, asparagine 921, asparagine 937, asparagine 938, asparagine 956, asparagine 1007, asparagine 1019, asparagine 1037, asparagine 1062, asparagine 1069, and asparagine 1080. Residues glycine 1124 to serine 1147 form a disordered region. Residues lysine 1125–serine 1147 show a composition bias toward polar residues. Residues asparagine 1179, asparagine 1193, asparagine 1275, asparagine 1290, asparagine 1308, asparagine 1341, asparagine 1391, asparagine 1419, asparagine 1429, asparagine 1453, asparagine 1547, and asparagine 1618 are each glycosylated (N-linked (GlcNAc...) asparagine). Positions threonine 1302 to isoleucine 1314 are enriched in polar residues. The interval threonine 1302–arginine 1326 is disordered. Residues lysine 1592 to glutamine 1632 are disordered. Tyrosine 1675 and tyrosine 1691 each carry sulfotyrosine. 2 Plastocyanin-like domains span residues lysine 1705–cysteine 1869 and glycine 1879–cysteine 2032. Residues lysine 1705–cysteine 2032 enclose the F5/8 type A 3 domain. Asparagine 1821 carries an N-linked (GlcNAc...) asparagine glycan. 2 consecutive F5/8 type C domains span residues cysteine 2032 to cysteine 2180 and cysteine 2185 to cysteine 2337. Disulfide bonds link cysteine 2032–cysteine 2180 and cysteine 2185–cysteine 2337. 2 N-linked (GlcNAc...) asparagine glycosylation sites follow: asparagine 2129 and asparagine 2281.

Belongs to the multicopper oxidase family. Interacts with vWF. vWF binding is essential for the stabilization of F8 in circulation. Proteolytically cleaved by cathepsin CTSG to produce a partially activated form.

It is found in the secreted. It localises to the extracellular space. Its function is as follows. Factor VIII, along with calcium and phospholipid, acts as a cofactor for factor IXa when it converts factor X to the activated form, factor Xa. The chain is Coagulation factor VIII (F8) from Canis lupus familiaris (Dog).